Here is a 76-residue protein sequence, read N- to C-terminus: High-potential iron-sulfur protein isozyme 2 (76 aa).

The [4Fe-4S] cluster site is built by C38, C41, C54, and C70.

It belongs to the high-potential iron-sulfur protein (HiPIP) family. As to quaternary structure, homodimer.

In terms of biological role, specific class of high-redox-potential 4Fe-4S ferredoxins. Functions in anaerobic electron transport in most purple and in some other photosynthetic bacteria and in at least one genus (Paracoccus) of halophilic, denitrifying bacteria. The chain is High-potential iron-sulfur protein isozyme 2 (hip2) from Halorhodospira halophila (Ectothiorhodospira halophila).